Here is a 250-residue protein sequence, read N- to C-terminus: MPAPEGEAIWLWLGTAGMFLGMLYFIARGWGETDSRRQKFYIATILITAIAFVNYLAMALGFGLTIVEIAGEQRPIYWARYSDWLFTTPLLLYDLGLLAGADRNTISSLVSLDVLMIGTGLVATLSAGSGVLSAGAERLVWWGISTAFLLVLLYFLFSSLSGRVADLPSDTRSTFKTLRNLVTVVWLVYPVWWLVGTEGIGLVGIGIETAGFMVIDLVAKVGFGIILLRSHGVLDGAAETTGAGATATAD.

At 1–9 (MPAPEGEAI) the chain is on the extracellular side. Residues 10 to 27 (WLWLGTAGMFLGMLYFIA) form a helical membrane-spanning segment. Residues 28 to 41 (RGWGETDSRRQKFY) lie on the Cytoplasmic side of the membrane. Residues 42–60 (IATILITAIAFVNYLAMAL) traverse the membrane as a helical segment. The Extracellular portion of the chain corresponds to 61–77 (GFGLTIVEIAGEQRPIY). The helical transmembrane segment at 78–94 (WARYSDWLFTTPLLLYD) threads the bilayer. Residues 95-105 (LGLLAGADRNT) are Cytoplasmic-facing. Residues 106 to 125 (ISSLVSLDVLMIGTGLVATL) form a helical membrane-spanning segment. At 126–138 (SAGSGVLSAGAER) the chain is on the extracellular side. A helical transmembrane segment spans residues 139–158 (LVWWGISTAFLLVLLYFLFS). The Cytoplasmic portion of the chain corresponds to 159-176 (SLSGRVADLPSDTRSTFK). The chain crosses the membrane as a helical span at residues 177-195 (TLRNLVTVVWLVYPVWWLV). The Extracellular portion of the chain corresponds to 196 to 207 (GTEGIGLVGIGI). A helical transmembrane segment spans residues 208 to 227 (ETAGFMVIDLVAKVGFGIIL). Residue lysine 220 is modified to N6-(retinylidene)lysine. Over 228-250 (LRSHGVLDGAAETTGAGATATAD) the chain is Cytoplasmic.

Belongs to the archaeal/bacterial/fungal opsin family. In terms of assembly, homotrimer. Binds bacterioruberin in the crevice between neighboring subunits.

It is found in the cell membrane. In terms of biological role, light-driven proton pump. The sequence is that of Cruxrhodopsin-3 (cop3) from Haloarcula vallismortis (Halobacterium vallismortis).